The chain runs to 446 residues: Methylenetetrahydrofolate--tRNA-(uracil-5-)-methyltransferase TrmFO (446 aa).

8 to 13 (GGGLAG) lines the FAD pocket.

Belongs to the MnmG family. TrmFO subfamily. FAD serves as cofactor.

It is found in the cytoplasm. The catalysed reaction is uridine(54) in tRNA + (6R)-5,10-methylene-5,6,7,8-tetrahydrofolate + NADH + H(+) = 5-methyluridine(54) in tRNA + (6S)-5,6,7,8-tetrahydrofolate + NAD(+). It carries out the reaction uridine(54) in tRNA + (6R)-5,10-methylene-5,6,7,8-tetrahydrofolate + NADPH + H(+) = 5-methyluridine(54) in tRNA + (6S)-5,6,7,8-tetrahydrofolate + NADP(+). Its function is as follows. Catalyzes the folate-dependent formation of 5-methyl-uridine at position 54 (M-5-U54) in all tRNAs. This Zymomonas mobilis subsp. mobilis (strain ATCC 31821 / ZM4 / CP4) protein is Methylenetetrahydrofolate--tRNA-(uracil-5-)-methyltransferase TrmFO.